A 1685-amino-acid chain; its full sequence is Collagen alpha-5(IV) chain (1685 aa).

An N-terminal signal peptide occupies residues 1–26; sequence MKLRGVSLAAGLFLLALSLWGQPAEA. The interval 27-41 is nonhelical region (NC2); that stretch reads AACYGCSPGSKCDCS. The tract at residues 42–1456 is triple-helical region; the sequence is GIKGEKGERG…QGPPGPPGTS (1415 aa). The segment at 49–1459 is disordered; the sequence is ERGFPGLEGH…PGPPGTSSVA (1411 aa). Positions 52 to 61 are enriched in low complexity; sequence FPGLEGHPGL. The span at 62–73 shows a compositional bias: pro residues; it reads PGFPGPEGPPGP. Residue asparagine 125 is glycosylated (N-linked (GlcNAc...) asparagine). A compositionally biased stretch (pro residues) spans 188–212; sequence TGIPGPIGPPGPPGLMGPPGPPGLP. Positions 214-225 are enriched in low complexity; sequence PKGNMGLNFQGP. Basic and acidic residues predominate over residues 246 to 257; that stretch reads EQKRPIDVEFQK. Residues 266 to 281 are compositionally biased toward pro residues; the sequence is RGPPGPPGIRGPPGPP. Composition is skewed to basic and acidic residues over residues 284–305 and 324–333; these read EKGE…KDGE and PGRDGEKGQK. Over residues 413–430 the composition is skewed to low complexity; it reads PPGISIPGPPGLDGQPGA. Composition is skewed to pro residues over residues 431-445, 493-505, 620-630, and 709-727; these read PGLP…PHIP, PGQP…PGPP, MGPPGFGPPGP, and PGPP…PGAP. The segment covering 788–797 has biased composition (low complexity); the sequence is RTGLDGLPGP. 2 stretches are compositionally biased toward pro residues: residues 848 to 859 and 868 to 880; these read PGPPGLDVPGPP and PGAP…PGSP. Low complexity-rich tracts occupy residues 882–901, 912–931, 983–999, 1010–1026, and 1111–1120; these read LPGK…MGMM, IPGR…QGQP, YQGL…SGQP, NPGL…PGLK, and TPGAKGQPGL. Pro residues predominate over residues 1139 to 1148; the sequence is PGNPGLPGEP. Composition is skewed to gly residues over residues 1149–1158 and 1202–1211; these read GPVGGGGHPG and GQKGDGGLPG. Pro residues-rich tracts occupy residues 1234-1243 and 1256-1274; these read QGPPGPPGSP and PQGP…PPGL. The segment covering 1295-1308 has biased composition (low complexity); the sequence is LPGLKGDQGPPGLQ. Pro residues predominate over residues 1353–1362; sequence IGPPGPPGLP. The region spanning 1461–1685 is the Collagen IV NC1 domain; it reads GFLITRHSQT…SRCQVCMKRT (225 aa). Disulfide bonds link cysteine 1476/cysteine 1567, cysteine 1509/cysteine 1564, cysteine 1521/cysteine 1527, cysteine 1586/cysteine 1681, cysteine 1620/cysteine 1678, and cysteine 1632/cysteine 1638. An S-Lysyl-methionine sulfilimine (Met-Lys) (interchain with K-1667) cross-link involves residue methionine 1549. An S-Lysyl-methionine sulfilimine (Lys-Met) (interchain with M-1549) cross-link involves residue lysine 1667.

The protein belongs to the type IV collagen family. As to quaternary structure, there are six type IV collagen isoforms, alpha 1(IV)-alpha 6(IV), each of which can form a triple helix structure with 2 other chains to generate type IV collagen network. Post-translationally, prolines at the third position of the tripeptide repeating unit (G-X-Y) are hydroxylated in some or all of the chains. In terms of processing, type IV collagens contain numerous cysteine residues which are involved in inter- and intramolecular disulfide bonding. 12 of these, located in the NC1 domain, are conserved in all known type IV collagens. The trimeric structure of the NC1 domains is stabilized by covalent bonds between Lys and Met residues. As to expression, isoform 2 is found in kidney.

It localises to the secreted. The protein resides in the extracellular space. It is found in the extracellular matrix. The protein localises to the basement membrane. Type IV collagen is the major structural component of glomerular basement membranes (GBM), forming a 'chicken-wire' meshwork together with laminins, proteoglycans and entactin/nidogen. The sequence is that of Collagen alpha-5(IV) chain (COL4A5) from Homo sapiens (Human).